The sequence spans 375 residues: Peptide chain release factor 1 (375 aa).

Gln237 carries the N5-methylglutamine modification. Residues 289–299 show a composition bias toward basic and acidic residues; sequence AAREAQERQER. The segment at 289–326 is disordered; that stretch reads AAREAQERQERASQVGSGDRSEKIRTYNYPQNRVTDHR.

This sequence belongs to the prokaryotic/mitochondrial release factor family. In terms of processing, methylated by PrmC. Methylation increases the termination efficiency of RF1.

The protein resides in the cytoplasm. Peptide chain release factor 1 directs the termination of translation in response to the peptide chain termination codons UAG and UAA. The protein is Peptide chain release factor 1 (prfA) of Deinococcus radiodurans (strain ATCC 13939 / DSM 20539 / JCM 16871 / CCUG 27074 / LMG 4051 / NBRC 15346 / NCIMB 9279 / VKM B-1422 / R1).